A 400-amino-acid chain; its full sequence is Nicotinate phosphoribosyltransferase (400 aa).

Phosphohistidine; by autocatalysis is present on His220.

This sequence belongs to the NAPRTase family. Post-translationally, transiently phosphorylated on a His residue during the reaction cycle. Phosphorylation strongly increases the affinity for substrates and increases the rate of nicotinate D-ribonucleotide production. Dephosphorylation regenerates the low-affinity form of the enzyme, leading to product release.

It carries out the reaction nicotinate + 5-phospho-alpha-D-ribose 1-diphosphate + ATP + H2O = nicotinate beta-D-ribonucleotide + ADP + phosphate + diphosphate. Its pathway is cofactor biosynthesis; NAD(+) biosynthesis; nicotinate D-ribonucleotide from nicotinate: step 1/1. Catalyzes the synthesis of beta-nicotinate D-ribonucleotide from nicotinate and 5-phospho-D-ribose 1-phosphate at the expense of ATP. This is Nicotinate phosphoribosyltransferase from Escherichia fergusonii (strain ATCC 35469 / DSM 13698 / CCUG 18766 / IAM 14443 / JCM 21226 / LMG 7866 / NBRC 102419 / NCTC 12128 / CDC 0568-73).